Consider the following 1086-residue polypeptide: Auxin response factor 19 (1086 aa).

Positions 126–228 (FCKTLTASDT…QLMLGIRRAN (103 aa)) form a DNA-binding region, TF-B3. Residues 454-485 (PSKLLNFQSPNLSSANSQFNKPNTVNHISQQM) are compositionally biased toward polar residues. Disordered regions lie at residues 454 to 504 (PSKL…QQQQ), 545 to 564 (QSPN…QSML), 624 to 647 (LSQN…QQLQ), and 659 to 788 (QQQS…SVFE). Residues 486-504 (QAQPAMVKSQQQQQQQQQQ) show a composition bias toward low complexity. A compositionally biased stretch (low complexity) spans 659-697 (QQQSIPPVSSSLQPQLSALQQTQSHQLQQLLSSQNQQPL). Over residues 700–710 (GNNSFPASTFM) the composition is skewed to polar residues. The segment covering 711-724 (QPPQIQVSPQQQGQ) has biased composition (low complexity). Residues 747–771 (SCSTSPSANNTGHDNVSPTNFLSRN) are compositionally biased toward polar residues. The span at 772 to 785 (QQQGQAASVSASDS) shows a compositional bias: low complexity. A PB1 domain is found at 958-1051 (RTYTKVQKRG…EVQQMSLDGD (94 aa)).

It belongs to the ARF family. Homodimers and heterodimers. Interacts with the auxin-responsive protein IAA1. Binds to JMJ30. Binds to ATXR2 in the nucleus.

It localises to the nucleus. Auxin response factors (ARFs) are transcriptional factors that bind specifically to the DNA sequence 5'-TGTCTC-3' found in the auxin-responsive promoter elements (AuxREs). Could act as transcriptional activator or repressor. Formation of heterodimers with Aux/IAA proteins may alter their ability to modulate early auxin response genes expression. Involved in ethylene responses. Regulates lateral root formation through direct regulation of LBD16 and/or LBD29. Functionally redundant with ARF7. Involved in cellular dedifferentiation during callus formation on callus-inducing medium (CIM) and in an ATXR2-dependent manner. The sequence is that of Auxin response factor 19 from Arabidopsis thaliana (Mouse-ear cress).